Reading from the N-terminus, the 226-residue chain is tRNA (guanine-N(1)-)-methyltransferase (226 aa).

Residues G112 and 132 to 137 (IGDYVL) contribute to the S-adenosyl-L-methionine site.

This sequence belongs to the RNA methyltransferase TrmD family. As to quaternary structure, homodimer.

The protein localises to the cytoplasm. It catalyses the reaction guanosine(37) in tRNA + S-adenosyl-L-methionine = N(1)-methylguanosine(37) in tRNA + S-adenosyl-L-homocysteine + H(+). Specifically methylates guanosine-37 in various tRNAs. The chain is tRNA (guanine-N(1)-)-methyltransferase from Flavobacterium johnsoniae (strain ATCC 17061 / DSM 2064 / JCM 8514 / BCRC 14874 / CCUG 350202 / NBRC 14942 / NCIMB 11054 / UW101) (Cytophaga johnsonae).